A 500-amino-acid chain; its full sequence is Proline/betaine transporter (500 aa).

The Cytoplasmic segment spans residues 1–37 (MLKRKKVKPITLRDVTIIDDGKLRKAITAASLGNAME). Residues 38–58 (WFDFGVYGFVAYALGKVFFPG) traverse the membrane as a helical segment. Residues 59–65 (ADPSVQM) are Periplasmic-facing. A helical transmembrane segment spans residues 66 to 86 (VAALATFSVPFLIRPLGGLFF). The Cytoplasmic segment spans residues 87 to 97 (GMLGDKYGRQK). A helical membrane pass occupies residues 98-118 (ILAITIVIMSISTFCIGLIPS). At 119–121 (YDT) the chain is on the periplasmic side. The helical transmembrane segment at 122–142 (IGIWAPILLLICKMAQGFSVG) threads the bilayer. Residues 143–169 (GEYTGASIFVAEYSPDRKRGFMGSWLD) lie on the Cytoplasmic side of the membrane. The chain crosses the membrane as a helical span at residues 170-190 (FGSIAGFVLGAGVVVLISTIV). The Periplasmic segment spans residues 191-194 (GEAN). A helical transmembrane segment spans residues 195-215 (FLDWGWRIPFFIALPLGIIGL). The Cytoplasmic segment spans residues 216–260 (YLRHALEETPAFQQHVDKLEQGDREGLQDGPKVSFKEIATKYWRS). The helical transmembrane segment at 261–281 (LLTCIGLVIATNVTYYMLLTY) threads the bilayer. Topologically, residues 282–297 (MPSYLSHNLHYSEDHG) are periplasmic. A helical membrane pass occupies residues 298-318 (VLIIIAIMIGMLFVQPVMGLL). The Cytoplasmic portion of the chain corresponds to 319–325 (SDRFGRR). The helical transmembrane segment at 326–346 (PFVLLGSVALFVLAIPAFILI) threads the bilayer. Residues 347–350 (NSNV) lie on the Periplasmic side of the membrane. Residues 351–371 (IGLIFAGLLMLAVILNCFTGV) traverse the membrane as a helical segment. Topologically, residues 372 to 390 (MASTLPAMFPTHIRYSALA) are cytoplasmic. Residues 391-411 (AAFNISVLVAGLTPTLAAWLV) form a helical membrane-spanning segment. The Periplasmic portion of the chain corresponds to 412-416 (ESSQN). Residues 417 to 437 (LMMPAYYLMVVAVVGLITGVT) traverse the membrane as a helical segment. At 438 to 500 (MKETANRPLK…LVQQHPRIDE (63 aa)) the chain is on the cytoplasmic side. A coiled-coil region spans residues 453–498 (ASDIQEAKEILVEHYDNIEQKIDDIDHEIADLQAKRTRLVQQHPRI).

Belongs to the major facilitator superfamily. Metabolite:H+ Symporter (MHS) family (TC 2.A.1.6) family.

Its subcellular location is the cell inner membrane. In terms of biological role, proton symporter that senses osmotic shifts and responds by importing osmolytes such as proline, glycine betaine, stachydrine, pipecolic acid, ectoine and taurine. It is both an osmosensor and an osmoregulator which is available to participate early in the bacterial osmoregulatory response. The polypeptide is Proline/betaine transporter (proP) (Escherichia coli O157:H7).